We begin with the raw amino-acid sequence, 824 residues long: Leucine--tRNA ligase (824 aa).

The short motif at 42-52 (PYPSGRIHMGH) is the 'HIGH' region element. A 'KMSKS' region motif is present at residues 581–585 (KMSKS). Lys-584 lines the ATP pocket.

Belongs to the class-I aminoacyl-tRNA synthetase family.

Its subcellular location is the cytoplasm. It carries out the reaction tRNA(Leu) + L-leucine + ATP = L-leucyl-tRNA(Leu) + AMP + diphosphate. This Geotalea uraniireducens (strain Rf4) (Geobacter uraniireducens) protein is Leucine--tRNA ligase.